The following is a 338-amino-acid chain: tRNA N6-adenosine threonylcarbamoyltransferase (338 aa).

Residues His-109 and His-113 each contribute to the Fe cation site. Residues 132-136 (AISGA), Asp-165, Gly-178, and Asn-277 contribute to the substrate site. Asp-302 is a binding site for Fe cation.

Belongs to the KAE1 / TsaD family. Fe(2+) is required as a cofactor.

It is found in the cytoplasm. It catalyses the reaction L-threonylcarbamoyladenylate + adenosine(37) in tRNA = N(6)-L-threonylcarbamoyladenosine(37) in tRNA + AMP + H(+). Its function is as follows. Required for the formation of a threonylcarbamoyl group on adenosine at position 37 (t(6)A37) in tRNAs that read codons beginning with adenine. Is involved in the transfer of the threonylcarbamoyl moiety of threonylcarbamoyl-AMP (TC-AMP) to the N6 group of A37, together with TsaE and TsaB. TsaD likely plays a direct catalytic role in this reaction. This is tRNA N6-adenosine threonylcarbamoyltransferase from Chlamydia trachomatis serovar L2b (strain UCH-1/proctitis).